Reading from the N-terminus, the 186-residue chain is MSEGVELKELKRRMDGAIAAFKHDIASLRTGRASANVLDPVTVEAYGSRMPLNQVANIMVPEPRMLSVSVWDKTMVGAVDRAIRESNLGLNPIIDGQNLRIPLPELNEERRKSLVKVAHDYAEKSKVAVRHVRRDGMDGLKKAEKDGDIGQDESRAQSERVQKMTDEVISEIDRLLAEKEKEIMQV.

Residues 135–162 (DGMDGLKKAEKDGDIGQDESRAQSERVQ) are disordered.

This sequence belongs to the RRF family.

The protein resides in the cytoplasm. In terms of biological role, responsible for the release of ribosomes from messenger RNA at the termination of protein biosynthesis. May increase the efficiency of translation by recycling ribosomes from one round of translation to another. The polypeptide is Ribosome-recycling factor (Sinorhizobium fredii (strain NBRC 101917 / NGR234)).